Consider the following 81-residue polypeptide: Defensin-like protein 130 (81 aa).

The N-terminal stretch at 1 to 21 is a signal peptide; the sequence is MTKNTSLTIFMVVLVIGMLYT. Intrachain disulfides connect C32-C81, C41-C63, C46-C75, and C50-C77.

This sequence belongs to the DEFL family.

It localises to the secreted. The sequence is that of Defensin-like protein 130 (LCR28) from Arabidopsis thaliana (Mouse-ear cress).